The chain runs to 284 residues: Bifunctional protein FolD (284 aa).

NADP(+) contacts are provided by residues 166–168 (GAS), serine 191, and isoleucine 232.

The protein belongs to the tetrahydrofolate dehydrogenase/cyclohydrolase family. As to quaternary structure, homodimer.

It catalyses the reaction (6R)-5,10-methylene-5,6,7,8-tetrahydrofolate + NADP(+) = (6R)-5,10-methenyltetrahydrofolate + NADPH. The enzyme catalyses (6R)-5,10-methenyltetrahydrofolate + H2O = (6R)-10-formyltetrahydrofolate + H(+). It participates in one-carbon metabolism; tetrahydrofolate interconversion. Its function is as follows. Catalyzes the oxidation of 5,10-methylenetetrahydrofolate to 5,10-methenyltetrahydrofolate and then the hydrolysis of 5,10-methenyltetrahydrofolate to 10-formyltetrahydrofolate. The protein is Bifunctional protein FolD of Thiobacillus denitrificans (strain ATCC 25259 / T1).